A 150-amino-acid polypeptide reads, in one-letter code: Translation machinery-associated protein 17 (150 aa).

A phosphoserine mark is found at serine 24 and serine 68. The interval 110-139 (RKTGHGKSKHEVEAKDNTNKGPDVDMDNSN) is disordered. The span at 118-127 (KHEVEAKDNT) shows a compositional bias: basic and acidic residues.

As to quaternary structure, interacts with RPT6. Interacts with the 40S and 60S ribosomal subunits.

The protein localises to the cytoplasm. It is found in the nucleus. Functionally, ATPase-dedicated chaperone that assists the formation of the RPT6-RPT3 ATPase pair, an early step in proteasome assembly. Plays a key role in maintaining homeostatic proteasome levels and adjusting proteasome assembly when demands increase, such as during proteasome stresses. Function overlaps with RPN14. The sequence is that of Translation machinery-associated protein 17 (TMA17) from Saccharomyces cerevisiae (strain ATCC 204508 / S288c) (Baker's yeast).